The sequence spans 873 residues: Protein SEY1 (873 aa).

Topologically, residues 1–750 (MVANGHFFAG…KRSAIGGITQ (750 aa)) are cytoplasmic. Residues 50–308 (GFNYHLISVF…IPADGFAVYA (259 aa)) enclose the GB1/RHD3-type G domain. 60-67 (GSQSTGKS) contacts GTP. Residues 677–701 (LDKWIGHTPSSATPADEEDLTPIGG) are disordered. The span at 691–701 (ADEEDLTPIGG) shows a compositional bias: acidic residues. A helical membrane pass occupies residues 751–771 (VPLYFYGLLLALGWNEIVAVL). At 772–774 (RNP) the chain is on the lumenal side. A helical membrane pass occupies residues 775 to 795 (AYFLLLFVCAVTAYVTYQLNL). The Cytoplasmic portion of the chain corresponds to 796 to 873 (WGPIIKMTEA…IDDADDDDDF (78 aa)). The tract at residues 841–873 (EGYDMSNMKNRKSAGGYQNNRSHIDDADDDDDF) is disordered.

Belongs to the TRAFAC class dynamin-like GTPase superfamily. GB1/RHD3 GTPase family. RHD3 subfamily.

The protein resides in the endoplasmic reticulum membrane. Functionally, cooperates with the reticulon proteins and tubule-shaping DP1 family proteins to generate and maintain the structure of the tubular endoplasmic reticulum network. Has GTPase activity, which is required for its function in ER organization. The protein is Protein SEY1 of Paracoccidioides lutzii (strain ATCC MYA-826 / Pb01) (Paracoccidioides brasiliensis).